A 120-amino-acid polypeptide reads, in one-letter code: Ribonuclease P protein component 4 (120 aa).

Residues C68, C71, C97, and C100 each coordinate Zn(2+).

The protein belongs to the eukaryotic/archaeal RNase P protein component 4 family. Consists of a catalytic RNA component and at least 5 protein subunits. Forms a heterodimeric subcomplex with Rnp1. Reconstituted enzyme missing individual protein subunits is suboptimally active, showing each subunit contributes to optimization of activity. Requires Zn(2+) as cofactor.

Its subcellular location is the cytoplasm. It catalyses the reaction Endonucleolytic cleavage of RNA, removing 5'-extranucleotides from tRNA precursor.. In terms of biological role, part of ribonuclease P, a protein complex that generates mature tRNA molecules by cleaving their 5'-ends. Binds RNase P RNA. In Pyrococcus horikoshii (strain ATCC 700860 / DSM 12428 / JCM 9974 / NBRC 100139 / OT-3), this protein is Ribonuclease P protein component 4.